A 406-amino-acid polypeptide reads, in one-letter code: GTPase Obg (406 aa).

An Obg domain is found at 1 to 159; sequence MKFVDEVSIF…RDLKLELKVL (159 aa). Residues 126–149 form a disordered region; it reads GNTRFKSSTNRAPRQTTPGKPGES. The span at 129–143 shows a compositional bias: polar residues; sequence RFKSSTNRAPRQTTP. In terms of domain architecture, OBG-type G spans 160–333; it reads ADVGLLGLPN…ICRDIMHYLE (174 aa). GTP-binding positions include 166–173, 191–195, 213–216, 283–286, and 314–316; these read GLPNAGKS, FTTLV, DIPG, NKMD, and SAI. Mg(2+) contacts are provided by Ser-173 and Thr-193. Residues 376-406 form a disordered region; sequence SGVRSVDDIDEDDDFFDDEDDDGPEIIYVRD. Residues 383–399 are compositionally biased toward acidic residues; it reads DIDEDDDFFDDEDDDGP.

Belongs to the TRAFAC class OBG-HflX-like GTPase superfamily. OBG GTPase family. As to quaternary structure, monomer. Requires Mg(2+) as cofactor.

The protein resides in the cytoplasm. Its function is as follows. An essential GTPase which binds GTP, GDP and possibly (p)ppGpp with moderate affinity, with high nucleotide exchange rates and a fairly low GTP hydrolysis rate. Plays a role in control of the cell cycle, stress response, ribosome biogenesis and in those bacteria that undergo differentiation, in morphogenesis control. The protein is GTPase Obg of Ectopseudomonas mendocina (strain ymp) (Pseudomonas mendocina).